The following is a 196-amino-acid chain: Charged multivesicular body protein 1a (196 aa).

Residues 5-41 (LFQLKFTAKQLEKLAKKAEKDSNTEQAKVKKALQQKN) adopt a coiled-coil conformation. Positions 170 to 181 (QGASSVGESSTR) are enriched in polar residues. The segment at 170–196 (QGASSVGESSTRTQEDQLSRRLASLRN) is disordered. The MIT-interacting motif motif lies at 185-195 (DQLSRRLASLR).

The protein belongs to the SNF7 family. Probable peripherally associated component of the endosomal sorting required for transport complex III (ESCRT-III).

It localises to the cytoplasm. The protein resides in the endosome membrane. In terms of biological role, probable peripherally associated component of the endosomal sorting required for transport complex III (ESCRT-III) which is involved in multivesicular bodies (MVBs) formation and sorting of endosomal cargo proteins into MVBs. MVBs contain intraluminal vesicles (ILVs) that are generated by invagination and scission from the limiting membrane of the endosome and mostly are delivered to lysosomes enabling degradation of membrane proteins, such as stimulated growth factor receptors, lysosomal enzymes and lipids. The protein is Charged multivesicular body protein 1a (chmp1a) of Xenopus laevis (African clawed frog).